A 311-amino-acid polypeptide reads, in one-letter code: Aspartate carbamoyltransferase catalytic subunit (311 aa).

Arg55 and Thr56 together coordinate carbamoyl phosphate. L-aspartate is bound at residue Lys85. 3 residues coordinate carbamoyl phosphate: Arg106, His135, and Gln138. Residues Arg168 and Arg230 each contribute to the L-aspartate site. Carbamoyl phosphate contacts are provided by Leu268 and Pro269.

The protein belongs to the aspartate/ornithine carbamoyltransferase superfamily. ATCase family. Heterododecamer (2C3:3R2) of six catalytic PyrB chains organized as two trimers (C3), and six regulatory PyrI chains organized as three dimers (R2).

The enzyme catalyses carbamoyl phosphate + L-aspartate = N-carbamoyl-L-aspartate + phosphate + H(+). Its pathway is pyrimidine metabolism; UMP biosynthesis via de novo pathway; (S)-dihydroorotate from bicarbonate: step 2/3. Catalyzes the condensation of carbamoyl phosphate and aspartate to form carbamoyl aspartate and inorganic phosphate, the committed step in the de novo pyrimidine nucleotide biosynthesis pathway. The polypeptide is Aspartate carbamoyltransferase catalytic subunit (Salmonella dublin (strain CT_02021853)).